Reading from the N-terminus, the 192-residue chain is 3-isopropylmalate dehydratase small subunit (192 aa).

Belongs to the LeuD family. LeuD type 1 subfamily. In terms of assembly, heterodimer of LeuC and LeuD.

The catalysed reaction is (2R,3S)-3-isopropylmalate = (2S)-2-isopropylmalate. Its pathway is amino-acid biosynthesis; L-leucine biosynthesis; L-leucine from 3-methyl-2-oxobutanoate: step 2/4. In terms of biological role, catalyzes the isomerization between 2-isopropylmalate and 3-isopropylmalate, via the formation of 2-isopropylmaleate. The chain is 3-isopropylmalate dehydratase small subunit from Zymomonas mobilis subsp. mobilis (strain ATCC 31821 / ZM4 / CP4).